Consider the following 216-residue polypeptide: Octanoyltransferase (216 aa).

The 175-residue stretch at 30–204 (KNNINEIWLL…NCKKFLMMNN (175 aa)) folds into the BPL/LPL catalytic domain. Residues 68-75 (RGGHMTFH), 135-137 (SIG), and 148-150 (GLA) each bind substrate. C166 acts as the Acyl-thioester intermediate in catalysis.

The protein belongs to the LipB family.

It localises to the cytoplasm. It catalyses the reaction octanoyl-[ACP] + L-lysyl-[protein] = N(6)-octanoyl-L-lysyl-[protein] + holo-[ACP] + H(+). Its pathway is protein modification; protein lipoylation via endogenous pathway; protein N(6)-(lipoyl)lysine from octanoyl-[acyl-carrier-protein]: step 1/2. In terms of biological role, catalyzes the transfer of endogenously produced octanoic acid from octanoyl-acyl-carrier-protein onto the lipoyl domains of lipoate-dependent enzymes. Lipoyl-ACP can also act as a substrate although octanoyl-ACP is likely to be the physiological substrate. In Wigglesworthia glossinidia brevipalpis, this protein is Octanoyltransferase.